Here is a 389-residue protein sequence, read N- to C-terminus: Succinate--CoA ligase [ADP-forming] subunit beta (389 aa).

Positions 9–244 (KQLFEHYGLP…LTQNDAREAE (236 aa)) constitute an ATP-grasp domain. Residues K46, 53–55 (GRG), E99, C102, and E107 each bind ATP. Mg(2+)-binding residues include N199 and D213. Substrate contacts are provided by residues N264 and 321–323 (GIV).

The protein belongs to the succinate/malate CoA ligase beta subunit family. In terms of assembly, heterotetramer of two alpha and two beta subunits. Mg(2+) is required as a cofactor.

It catalyses the reaction succinate + ATP + CoA = succinyl-CoA + ADP + phosphate. The enzyme catalyses GTP + succinate + CoA = succinyl-CoA + GDP + phosphate. The protein operates within carbohydrate metabolism; tricarboxylic acid cycle; succinate from succinyl-CoA (ligase route): step 1/1. Succinyl-CoA synthetase functions in the citric acid cycle (TCA), coupling the hydrolysis of succinyl-CoA to the synthesis of either ATP or GTP and thus represents the only step of substrate-level phosphorylation in the TCA. The beta subunit provides nucleotide specificity of the enzyme and binds the substrate succinate, while the binding sites for coenzyme A and phosphate are found in the alpha subunit. This chain is Succinate--CoA ligase [ADP-forming] subunit beta, found in Haemophilus influenzae (strain ATCC 51907 / DSM 11121 / KW20 / Rd).